The chain runs to 219 residues: Orotate phosphoribosyltransferase (219 aa).

Lys26 contributes to the 5-phospho-alpha-D-ribose 1-diphosphate binding site. Position 34 to 35 (34 to 35) interacts with orotate; that stretch reads FF. 5-phospho-alpha-D-ribose 1-diphosphate contacts are provided by residues 72 to 73, Arg98, Lys99, Lys102, His104, and 124 to 132; these read YK and DDVITAGTA. Positions 128 and 156 each coordinate orotate.

This sequence belongs to the purine/pyrimidine phosphoribosyltransferase family. PyrE subfamily. Homodimer. Mg(2+) serves as cofactor.

The catalysed reaction is orotidine 5'-phosphate + diphosphate = orotate + 5-phospho-alpha-D-ribose 1-diphosphate. The protein operates within pyrimidine metabolism; UMP biosynthesis via de novo pathway; UMP from orotate: step 1/2. Functionally, catalyzes the transfer of a ribosyl phosphate group from 5-phosphoribose 1-diphosphate to orotate, leading to the formation of orotidine monophosphate (OMP). In Xanthomonas campestris pv. campestris (strain 8004), this protein is Orotate phosphoribosyltransferase.